The following is a 266-amino-acid chain: Blue copper protein (266 aa).

The N-terminal stretch at 1 to 24 (MAYSKILFCFMIGFVGFLPAITMA) is a signal peptide. Phytocyanin domains lie at 25 to 56 (TQYL…GDTL), 57 to 102 (APPP…TVED), and 116 to 216 (TEYW…TVEG). N-linked (GlcNAc...) asparagine glycosylation occurs at Asn47. Cu cation is bound at residue His156. Asn162 carries N-linked (GlcNAc...) asparagine glycosylation. Cys169 and Cys203 form a disulfide bridge. Residues Cys197, His202, and Gln208 each contribute to the Cu cation site. Residues 245–265 (ITSPYKMFVGGAVSIWTILTL) form a helical membrane-spanning segment.

The protein localises to the membrane. The chain is Blue copper protein from Petunia hybrida (Petunia).